The chain runs to 750 residues: Eukaryotic translation initiation factor 3 subunit B (750 aa).

An RRM domain is found at 42-128 (TFVVVDGLPE…HTLRVNKMTD (87 aa)). WD repeat units follow at residues 195 to 234 (DRQQWTETFVQWSPQGTYLTSVHAQGVLLWGGASWARLRR), 236 to 292 (PHPF…PLRS), 309 to 348 (SAKFPWPAFKWSADDKYVARLNQGTSISVYELPKMNLMDK), and 519 to 562 (LDKK…EKPE).

It belongs to the eIF-3 subunit B family. In terms of assembly, component of the eukaryotic translation initiation factor 3 (eIF-3) complex.

Its subcellular location is the cytoplasm. Its function is as follows. RNA-binding component of the eukaryotic translation initiation factor 3 (eIF-3) complex, which is involved in protein synthesis of a specialized repertoire of mRNAs and, together with other initiation factors, stimulates binding of mRNA and methionyl-tRNAi to the 40S ribosome. The eIF-3 complex specifically targets and initiates translation of a subset of mRNAs involved in cell proliferation. The chain is Eukaryotic translation initiation factor 3 subunit B from Chaetomium globosum (strain ATCC 6205 / CBS 148.51 / DSM 1962 / NBRC 6347 / NRRL 1970) (Soil fungus).